The primary structure comprises 286 residues: 4-diphosphocytidyl-2-C-methyl-D-erythritol kinase (286 aa).

Residue Lys-11 is part of the active site. Residue 94–104 (PMGGGIGGGSS) participates in ATP binding. Asp-136 is a catalytic residue.

The protein belongs to the GHMP kinase family. IspE subfamily.

The enzyme catalyses 4-CDP-2-C-methyl-D-erythritol + ATP = 4-CDP-2-C-methyl-D-erythritol 2-phosphate + ADP + H(+). The protein operates within isoprenoid biosynthesis; isopentenyl diphosphate biosynthesis via DXP pathway; isopentenyl diphosphate from 1-deoxy-D-xylulose 5-phosphate: step 3/6. Its function is as follows. Catalyzes the phosphorylation of the position 2 hydroxy group of 4-diphosphocytidyl-2C-methyl-D-erythritol. This Pseudomonas putida (strain ATCC 700007 / DSM 6899 / JCM 31910 / BCRC 17059 / LMG 24140 / F1) protein is 4-diphosphocytidyl-2-C-methyl-D-erythritol kinase.